The primary structure comprises 150 residues: Putative F-box protein At2g33655 (150 aa).

The F-box domain maps to 1-47; that stretch reads MEKMSDLPRELVEEILSRVPVKSMREVRVTCKTWNALSKHISKAEAA.

In Arabidopsis thaliana (Mouse-ear cress), this protein is Putative F-box protein At2g33655.